The chain runs to 466 residues: 3-isopropylmalate dehydratase large subunit (466 aa).

3 residues coordinate [4Fe-4S] cluster: C347, C407, and C410.

The protein belongs to the aconitase/IPM isomerase family. LeuC type 1 subfamily. In terms of assembly, heterodimer of LeuC and LeuD. Requires [4Fe-4S] cluster as cofactor.

The catalysed reaction is (2R,3S)-3-isopropylmalate = (2S)-2-isopropylmalate. Its pathway is amino-acid biosynthesis; L-leucine biosynthesis; L-leucine from 3-methyl-2-oxobutanoate: step 2/4. Functionally, catalyzes the isomerization between 2-isopropylmalate and 3-isopropylmalate, via the formation of 2-isopropylmaleate. This Buchnera aphidicola subsp. Thelaxes suberi protein is 3-isopropylmalate dehydratase large subunit.